Consider the following 485-residue polypeptide: U4/U6 small nuclear ribonucleoprotein Prp31 homolog (485 aa).

Disordered stretches follow at residues 1 to 36 (MATL…EEDV) and 329 to 361 (IEKW…RRLR). Acidic residues predominate over residues 11–36 (DLDELSDNEAELDENDGDVGKEEEDV). The Nop domain maps to 216 to 334 (IAPNLSAIVG…IRKKIEKWQE (119 aa)). Residues 334-348 (EPPPARQPKPLPVPD) show a composition bias toward pro residues. A compositionally biased stretch (basic residues) spans 352–361 (KKRRGGRRLR). Residues 352–365 (KKRRGGRRLRKMKE) carry the Nuclear localization signal motif.

This sequence belongs to the PRP31 family. In terms of assembly, component of the U4/U6-U5 tri-snRNP complex composed of the U4, U6 and U5 snRNAs and pre-mRNA-splicing factors. Interacts with STA1 and SOP1.

It is found in the nucleus. The protein resides in the cajal body. In terms of biological role, involved in pre-mRNA splicing. Required for the assembly of the U4/U5/U6 tri-snRNP complex, one of the building blocks of the spliceosome. Functions in association with STA1 and ZOP1 in spliceosome dynamics and pre-mRNA splicing. Required for transcriptional regulation and pre-mRNA splicing of cold-responsive genes, such as LTI78/RD29A, KIN2/COR6.6 or COR15A, especially under cold stress. May play a role in stress response. Involved in transcriptional gene silencing of endogenous transposable elements, independently of the RNA-directed DNA methylation (RdDM) pathway. Seems not to participate in the small RNA biogenesis of the RdDM pathway. This chain is U4/U6 small nuclear ribonucleoprotein Prp31 homolog, found in Arabidopsis thaliana (Mouse-ear cress).